Here is a 137-residue protein sequence, read N- to C-terminus: Glutamate mutase sigma subunit (137 aa).

The B12-binding domain occupies 3–137 (KKTIVLGVIG…ADLKEDLNIK (135 aa)). Residues 13-17 (SDCHA), histidine 16, 61-63 (SSL), and 93-97 (NIVVG) contribute to the adenosylcob(III)alamin site.

It belongs to the methylaspartate mutase GlmS subunit family. In terms of assembly, heterotetramer composed of 2 epsilon subunits (GlmE) and 2 sigma subunits (GlmS). GlmE exists as a homodimer and GlmS as a monomer. Adenosylcob(III)alamin is required as a cofactor.

The catalysed reaction is (2S,3S)-3-methyl-L-aspartate = L-glutamate. It functions in the pathway amino-acid degradation; L-glutamate degradation via mesaconate pathway; acetate and pyruvate from L-glutamate: step 1/4. In terms of biological role, catalyzes the carbon skeleton rearrangement of L-glutamate to L-threo-3-methylaspartate ((2S,3S)-3-methylaspartate). The chain is Glutamate mutase sigma subunit from Clostridium tetani (strain Massachusetts / E88).